The sequence spans 274 residues: Receptor-like protein 44 (274 aa).

An N-terminal signal peptide occupies residues 1–24 (MTRSHRLLLLLLLIFQTAQRLTTA). Residues 25–223 (DPNDEACLKN…PLQEMMMKSK (199 aa)) lie on the Extracellular side of the membrane. N-linked (GlcNAc...) asparagine glycans are attached at residues N48, N82, and N95. 4 LRR repeats span residues 96 to 121 (CTNLQSLDLSSNQISGVIPPEIQYLV), 123 to 144 (LAVLNLSSNHLSGEITPQLALC), 145 to 168 (AYLNVIDLHDNELSGQIPQQLGLL), and 169 to 192 (ARLSAFDVSNNKLSGQIPTYLSNR). N127 carries an N-linked (GlcNAc...) asparagine glycan. N191 and N200 each carry an N-linked (GlcNAc...) asparagine glycan. Residues 224–244 (GLSVMAIVGIGLGSGIASLMI) form a helical membrane-spanning segment. Residues 245 to 274 (SFTGVCLWLRITEKKIVEEEGKISQSMPDY) lie on the Cytoplasmic side of the membrane.

Belongs to the RLP family.

The protein resides in the cell membrane. This Arabidopsis thaliana (Mouse-ear cress) protein is Receptor-like protein 44.